A 103-amino-acid chain; its full sequence is Large ribosomal subunit protein bL21 (103 aa).

It belongs to the bacterial ribosomal protein bL21 family. As to quaternary structure, part of the 50S ribosomal subunit. Contacts protein L20.

Its function is as follows. This protein binds to 23S rRNA in the presence of protein L20. The protein is Large ribosomal subunit protein bL21 of Heliobacterium modesticaldum (strain ATCC 51547 / Ice1).